The chain runs to 475 residues: Ribulose bisphosphate carboxylase large chain (475 aa).

Residues 1 to 2 constitute a propeptide that is removed on maturation; sequence MS. Pro3 is subject to N-acetylproline. The residue at position 14 (Lys14) is an N6,N6,N6-trimethyllysine. Substrate is bound by residues Asn123 and Thr173. Lys175 functions as the Proton acceptor in the catalytic mechanism. Lys177 is a substrate binding site. Mg(2+)-binding residues include Lys201, Asp203, and Glu204. The residue at position 201 (Lys201) is an N6-carboxylysine. Catalysis depends on His294, which acts as the Proton acceptor. Substrate contacts are provided by Arg295, His327, and Ser379.

The protein belongs to the RuBisCO large chain family. Type I subfamily. In terms of assembly, heterohexadecamer of 8 large chains and 8 small chains; disulfide-linked. The disulfide link is formed within the large subunit homodimers. Mg(2+) is required as a cofactor. In terms of processing, the disulfide bond which can form in the large chain dimeric partners within the hexadecamer appears to be associated with oxidative stress and protein turnover.

The protein resides in the plastid. Its subcellular location is the chloroplast. The catalysed reaction is 2 (2R)-3-phosphoglycerate + 2 H(+) = D-ribulose 1,5-bisphosphate + CO2 + H2O. The enzyme catalyses D-ribulose 1,5-bisphosphate + O2 = 2-phosphoglycolate + (2R)-3-phosphoglycerate + 2 H(+). Its function is as follows. RuBisCO catalyzes two reactions: the carboxylation of D-ribulose 1,5-bisphosphate, the primary event in carbon dioxide fixation, as well as the oxidative fragmentation of the pentose substrate in the photorespiration process. Both reactions occur simultaneously and in competition at the same active site. This is Ribulose bisphosphate carboxylase large chain from Angiopteris lygodiifolia (Turnip fern).